A 765-amino-acid chain; its full sequence is 5-methyltetrahydropteroyltriglutamate--homocysteine methyltransferase (765 aa).

5-methyltetrahydropteroyltri-L-glutamate is bound by residues 16–19 and Lys121; that span reads RELK. Residues 441 to 443 and Glu494 each bind L-homocysteine; that span reads IGS. L-methionine is bound by residues 441 to 443 and Glu494; that span reads IGS. 5-methyltetrahydropteroyltri-L-glutamate contacts are provided by residues 525–526 and Trp571; that span reads RC. Residue Asp609 coordinates L-homocysteine. Asp609 provides a ligand contact to L-methionine. Position 615 (Glu615) interacts with 5-methyltetrahydropteroyltri-L-glutamate. Zn(2+) is bound by residues His651, Cys653, and Glu675. His704 (proton donor) is an active-site residue. Cys736 is a binding site for Zn(2+).

The protein belongs to the vitamin-B12 independent methionine synthase family. Zn(2+) serves as cofactor.

It catalyses the reaction 5-methyltetrahydropteroyltri-L-glutamate + L-homocysteine = tetrahydropteroyltri-L-glutamate + L-methionine. It functions in the pathway amino-acid biosynthesis; L-methionine biosynthesis via de novo pathway; L-methionine from L-homocysteine (MetE route): step 1/1. Functionally, catalyzes the transfer of a methyl group from 5-methyltetrahydrofolate to homocysteine resulting in methionine formation. The chain is 5-methyltetrahydropteroyltriglutamate--homocysteine methyltransferase from Saccharophagus degradans (strain 2-40 / ATCC 43961 / DSM 17024).